Here is a 261-residue protein sequence, read N- to C-terminus: Cytochrome c oxidase subunit 3 (261 aa).

At 1–15 the chain is on the mitochondrial matrix side; it reads MAHQAHAYHMVDPSP. Residues 16–34 form a helical membrane-spanning segment; that stretch reads WPLTGAIAALLMTSGLAIW. Topologically, residues 35–40 are mitochondrial intermembrane; that stretch reads FHFHST. Residues 41-66 traverse the membrane as a helical segment; that stretch reads TLMTLGLILLLLTMYQWWRDIIREGT. Residues 67–72 are Mitochondrial matrix-facing; the sequence is FQGHHT. The chain crosses the membrane as a helical span at residues 73–105; it reads PPVQKGLRYGMILFITSEVFFFLGFFWAFYHSS. The Mitochondrial intermembrane segment spans residues 106–128; the sequence is LAPTPELGGCWPPTGITPLDPFE. Residues 129 to 152 traverse the membrane as a helical segment; it reads VPLLNTAVLLASGVTVTWAHHSIM. Topologically, residues 153–155 are mitochondrial matrix; the sequence is EGE. The helical transmembrane segment at 156–183 threads the bilayer; it reads RKQAIQSLALTILLGLYFTALQAMEYYE. Residues 184–190 lie on the Mitochondrial intermembrane side of the membrane; that stretch reads APFTIAD. The helical transmembrane segment at 191–223 threads the bilayer; it reads GVYGSTFFVATGFHGLHVIIGSTFLAVCLLRQI. Topologically, residues 224-232 are mitochondrial matrix; that stretch reads QYHFTSEHH. Residues 233-256 traverse the membrane as a helical segment; the sequence is FGFEAAAWYWHFVDVVWLFLYVSI. Over 257 to 261 the chain is Mitochondrial intermembrane; the sequence is YWWGS.

Belongs to the cytochrome c oxidase subunit 3 family. Component of the cytochrome c oxidase (complex IV, CIV), a multisubunit enzyme composed of 14 subunits. The complex is composed of a catalytic core of 3 subunits MT-CO1, MT-CO2 and MT-CO3, encoded in the mitochondrial DNA, and 11 supernumerary subunits COX4I, COX5A, COX5B, COX6A, COX6B, COX6C, COX7A, COX7B, COX7C, COX8 and NDUFA4, which are encoded in the nuclear genome. The complex exists as a monomer or a dimer and forms supercomplexes (SCs) in the inner mitochondrial membrane with NADH-ubiquinone oxidoreductase (complex I, CI) and ubiquinol-cytochrome c oxidoreductase (cytochrome b-c1 complex, complex III, CIII), resulting in different assemblies (supercomplex SCI(1)III(2)IV(1) and megacomplex MCI(2)III(2)IV(2)).

The protein localises to the mitochondrion inner membrane. It catalyses the reaction 4 Fe(II)-[cytochrome c] + O2 + 8 H(+)(in) = 4 Fe(III)-[cytochrome c] + 2 H2O + 4 H(+)(out). Component of the cytochrome c oxidase, the last enzyme in the mitochondrial electron transport chain which drives oxidative phosphorylation. The respiratory chain contains 3 multisubunit complexes succinate dehydrogenase (complex II, CII), ubiquinol-cytochrome c oxidoreductase (cytochrome b-c1 complex, complex III, CIII) and cytochrome c oxidase (complex IV, CIV), that cooperate to transfer electrons derived from NADH and succinate to molecular oxygen, creating an electrochemical gradient over the inner membrane that drives transmembrane transport and the ATP synthase. Cytochrome c oxidase is the component of the respiratory chain that catalyzes the reduction of oxygen to water. Electrons originating from reduced cytochrome c in the intermembrane space (IMS) are transferred via the dinuclear copper A center (CU(A)) of subunit 2 and heme A of subunit 1 to the active site in subunit 1, a binuclear center (BNC) formed by heme A3 and copper B (CU(B)). The BNC reduces molecular oxygen to 2 water molecules using 4 electrons from cytochrome c in the IMS and 4 protons from the mitochondrial matrix. The sequence is that of Cytochrome c oxidase subunit 3 (mt-co3) from Cyprinus carpio (Common carp).